The chain runs to 83 residues: Small ribosomal subunit protein uS15c (83 aa).

This sequence belongs to the universal ribosomal protein uS15 family. As to quaternary structure, part of the 30S ribosomal subunit.

The protein localises to the plastid. The protein resides in the chloroplast. The sequence is that of Small ribosomal subunit protein uS15c (rps15) from Fagopyrum esculentum subsp. ancestrale (Wild buckwheat).